The primary structure comprises 139 residues: mRNA stability protein mug134 (139 aa).

Residues 83-139 are disordered; sequence IGKEIPSPDTIPHRVVSAGSPNKEPSLHTKRPSESSPSGASSRRESVTRHDLESNEN. Residues 124 to 139 show a composition bias toward basic and acidic residues; it reads SRRESVTRHDLESNEN.

This sequence belongs to the endosulfine family.

The protein localises to the nucleus. It localises to the cytoplasm. Functionally, plays an essential role in initiation of the G0 program by preventing the degradation of specific nutrient-regulated mRNAs via the 5'-3' mRNA decay pathway. In Schizosaccharomyces pombe (strain 972 / ATCC 24843) (Fission yeast), this protein is mRNA stability protein mug134 (mug134).